Here is a 1406-residue protein sequence, read N- to C-terminus: DNA-directed RNA polymerase subunit beta' (1406 aa).

Positions 70, 72, 85, and 88 each coordinate Zn(2+). 3 residues coordinate Mg(2+): aspartate 460, aspartate 462, and aspartate 464. 4 residues coordinate Zn(2+): cysteine 814, cysteine 888, cysteine 895, and cysteine 898.

It belongs to the RNA polymerase beta' chain family. As to quaternary structure, the RNAP catalytic core consists of 2 alpha, 1 beta, 1 beta' and 1 omega subunit. When a sigma factor is associated with the core the holoenzyme is formed, which can initiate transcription. It depends on Mg(2+) as a cofactor. Requires Zn(2+) as cofactor.

It catalyses the reaction RNA(n) + a ribonucleoside 5'-triphosphate = RNA(n+1) + diphosphate. DNA-dependent RNA polymerase catalyzes the transcription of DNA into RNA using the four ribonucleoside triphosphates as substrates. The sequence is that of DNA-directed RNA polymerase subunit beta' from Photorhabdus laumondii subsp. laumondii (strain DSM 15139 / CIP 105565 / TT01) (Photorhabdus luminescens subsp. laumondii).